A 30-amino-acid polypeptide reads, in one-letter code: Photosystem I reaction center subunit XII (30 aa).

The helical transmembrane segment at 7–29 (LIAFFLAFTAGILAIKLGQALYD) threads the bilayer.

It belongs to the PsaM family.

It is found in the plastid. Its subcellular location is the chloroplast thylakoid membrane. In Pinus thunbergii (Japanese black pine), this protein is Photosystem I reaction center subunit XII.